The primary structure comprises 77 residues: Small ribosomal subunit protein bS20 (77 aa).

Belongs to the bacterial ribosomal protein bS20 family.

Its function is as follows. Binds directly to 16S ribosomal RNA. The protein is Small ribosomal subunit protein bS20 of Lactococcus lactis subsp. cremoris (strain MG1363).